The sequence spans 100 residues: MHITPREQEKLMIVVAADLARRRKDRGLKLNHPEAVALITYELIEGARDGRTVADLMSWGSTILTRDDVLEGIPEMIPDIQVEATFDDGTKLVTVHNPIR.

It belongs to the urease gamma subunit family. Heterotrimer of UreA (gamma), UreB (beta) and UreC (alpha) subunits. Three heterotrimers associate to form the active enzyme.

The protein resides in the cytoplasm. The catalysed reaction is urea + 2 H2O + H(+) = hydrogencarbonate + 2 NH4(+). Its pathway is nitrogen metabolism; urea degradation; CO(2) and NH(3) from urea (urease route): step 1/1. This is Urease subunit gamma from Corynebacterium glutamicum (strain R).